We begin with the raw amino-acid sequence, 371 residues long: MIARNQRTRVAVVYGGRSSEHAISCVSAGSILRNLDPERFDVVAVGITPDGSWVLTDGRPETLAITDGRLPEVSAESGTALALPADPGRRGELVSLSPAAAGEVLAAVDVVFPVLHGPYGEDGTIQGLLELAGVPYVGAGVLASAAGMDKEFTKKLLVAEGLPVGDHVVLRPGRANVTLDERERLGLPVFVKPARGGSSIGVSRVSDWAELPAAIEAARRHDPKVIVEAGIAGRELECGVLEYPDGRVDASTIGEIRVAGVRGREDGFYDFATKYLDDGAELDVPAKVEDDVADEIRRLAIRAFRAIDCQGLARVDFFLTDDGPVVNEINTMPGFTTISMYPRMWAASGVDYPTLLAAMVDTAVARGTGLR.

The region spanning 154–361 (KKLLVAEGLP…YPTLLAAMVD (208 aa)) is the ATP-grasp domain. 182–237 (RERLGLPVFVKPARGGSSIGVSRVSDWAELPAAIEAARRHDPKVIVEAGIAGRELE) provides a ligand contact to ATP. Mg(2+) is bound by residues Asp316, Glu328, and Asn330.

This sequence belongs to the D-alanine--D-alanine ligase family. Mg(2+) is required as a cofactor. The cofactor is Mn(2+).

Its subcellular location is the cytoplasm. It carries out the reaction 2 D-alanine + ATP = D-alanyl-D-alanine + ADP + phosphate + H(+). It functions in the pathway cell wall biogenesis; peptidoglycan biosynthesis. Cell wall formation. In Mycobacterium sp. (strain KMS), this protein is D-alanine--D-alanine ligase.